Reading from the N-terminus, the 39-residue chain is Photosystem II reaction center protein L (39 aa).

Residues Ser18–Phe38 form a helical membrane-spanning segment.

Belongs to the PsbL family. As to quaternary structure, PSII is composed of 1 copy each of membrane proteins PsbA, PsbB, PsbC, PsbD, PsbE, PsbF, PsbH, PsbI, PsbJ, PsbK, PsbL, PsbM, PsbT, PsbX, PsbY, PsbZ, Psb30/Ycf12, peripheral proteins PsbO, CyanoQ (PsbQ), PsbU, PsbV and a large number of cofactors. It forms dimeric complexes.

The protein resides in the cellular thylakoid membrane. One of the components of the core complex of photosystem II (PSII). PSII is a light-driven water:plastoquinone oxidoreductase that uses light energy to abstract electrons from H(2)O, generating O(2) and a proton gradient subsequently used for ATP formation. It consists of a core antenna complex that captures photons, and an electron transfer chain that converts photonic excitation into a charge separation. This subunit is found at the monomer-monomer interface and is required for correct PSII assembly and/or dimerization. The chain is Photosystem II reaction center protein L from Picosynechococcus sp. (strain ATCC 27264 / PCC 7002 / PR-6) (Agmenellum quadruplicatum).